A 330-amino-acid chain; its full sequence is Mas-related G-protein coupled receptor member X2 (330 aa).

Topologically, residues 1 to 33 are extracellular; the sequence is MDPTTPAWGNESTTMNGNDQALPLLCGKETLIP. Residues 34–54 traverse the membrane as a helical segment; it reads VFLILFIALVGLVGNGFVLWL. The Cytoplasmic portion of the chain corresponds to 55–63; that stretch reads LGFCMRRNA. The chain crosses the membrane as a helical span at residues 64-84; sequence FSVYVLSLAGADFLFLCFQLI. At 85–96 the chain is on the extracellular side; sequence NCLVYLSNFFCS. A helical transmembrane segment spans residues 97–117; the sequence is ISIDFPSFFTTVMTCAYLAGL. Residues 118–144 are Cytoplasmic-facing; that stretch reads SMLSTISTERCLSVLWPIWYRCRRPRH. A helical transmembrane segment spans residues 145 to 165; sequence LSAVVCVLLWALSLLLSILEG. At 166 to 184 the chain is on the extracellular side; it reads KFCGFFFSDGDSGWCQTFD. The helical transmembrane segment at 185 to 205 threads the bilayer; that stretch reads FITAAWLIFLFMVLCGSSLAL. The Cytoplasmic segment spans residues 206 to 228; it reads LVRILCGSRGLPLTRLYLTILLT. A helical membrane pass occupies residues 229–249; it reads VLVFLLCGLPFGIQWFLILWI. At 250–264 the chain is on the extracellular side; the sequence is WENSDVLFCHIHPVS. The chain crosses the membrane as a helical span at residues 265–285; sequence VVLSSLNSSANPIIYFFVGTF. Over 286 to 330 the chain is Cytoplasmic; it reads RKQWRLQQPILKLALQRALQDTAEVDHSEGCFRQGTPEMSRSSLV.

It belongs to the G-protein coupled receptor 1 family. Mas subfamily.

The protein localises to the cell membrane. Functionally, mast cell-specific receptor for basic secretagogues, i.e. cationic amphiphilic drugs, as well as endo- or exogenous peptides, consisting of a basic head group and a hydrophobic core. Recognizes and binds small molecules containing a cyclized tetrahydroisoquinoline (THIQ), such as non-steroidal neuromuscular blocking drugs (NMBDs), including tubocurarine and atracurium. In response to these compounds, mediates pseudo-allergic reactions characterized by histamine release, inflammation and airway contraction. The polypeptide is Mas-related G-protein coupled receptor member X2 (MRGPRX2) (Pongo pygmaeus (Bornean orangutan)).